The sequence spans 169 residues: Ribosome maturation factor RimM (169 aa).

In terms of domain architecture, PRC barrel spans 97–169 (EDEYYWADLV…TITADWGLDY (73 aa)).

This sequence belongs to the RimM family. As to quaternary structure, binds ribosomal protein uS19.

The protein resides in the cytoplasm. Its function is as follows. An accessory protein needed during the final step in the assembly of 30S ribosomal subunit, possibly for assembly of the head region. Essential for efficient processing of 16S rRNA. May be needed both before and after RbfA during the maturation of 16S rRNA. It has affinity for free ribosomal 30S subunits but not for 70S ribosomes. This Neisseria gonorrhoeae (strain ATCC 700825 / FA 1090) protein is Ribosome maturation factor RimM.